Consider the following 103-residue polypeptide: MYAVFQSGGKQHRVSEGQVVRLEKLELATGATVEFDSVLMVVNGEDVKIGAPVVAGAKVVAEVVAQGRGEKVKIVKFRRRKHSRKQQGHRQWFTEVKITGIQA.

Belongs to the bacterial ribosomal protein bL21 family. In terms of assembly, part of the 50S ribosomal subunit. Contacts protein L20.

In terms of biological role, this protein binds to 23S rRNA in the presence of protein L20. This chain is Large ribosomal subunit protein bL21, found in Haemophilus influenzae (strain PittEE).